Consider the following 282-residue polypeptide: Bifunctional protein FolD (282 aa).

Residues 165-167 (GRS), serine 190, and threonine 231 contribute to the NADP(+) site.

Belongs to the tetrahydrofolate dehydrogenase/cyclohydrolase family. In terms of assembly, homodimer.

The catalysed reaction is (6R)-5,10-methylene-5,6,7,8-tetrahydrofolate + NADP(+) = (6R)-5,10-methenyltetrahydrofolate + NADPH. It catalyses the reaction (6R)-5,10-methenyltetrahydrofolate + H2O = (6R)-10-formyltetrahydrofolate + H(+). Its pathway is one-carbon metabolism; tetrahydrofolate interconversion. Catalyzes the oxidation of 5,10-methylenetetrahydrofolate to 5,10-methenyltetrahydrofolate and then the hydrolysis of 5,10-methenyltetrahydrofolate to 10-formyltetrahydrofolate. The polypeptide is Bifunctional protein FolD (Clostridium beijerinckii (strain ATCC 51743 / NCIMB 8052) (Clostridium acetobutylicum)).